Reading from the N-terminus, the 1503-residue chain is Translocase of chloroplast 159, chloroplastic (1503 aa).

Polar residues predominate over residues 1–24 (MDSKSVTPEPTNPFYASSGQSGKT). The disordered stretch occupies residues 1–210 (MDSKSVTPEP…GGKVDVDDKS (210 aa)). A helical membrane pass occupies residues 21 to 37 (SGKTYASVVAAAAAAAA). S71 is modified (phosphoserine). 2 stretches are compositionally biased toward basic and acidic residues: residues 85–98 (KVSD…KEDS) and 176–210 (SESK…DDKS). Phosphoserine occurs at positions 210, 281, and 288. 2 disordered regions span residues 298 to 338 (KFTS…DVEK) and 429 to 464 (VHNK…SEGD). A compositionally biased stretch (basic and acidic residues) spans 447–456 (ESDKATEEGG). S448, S461, S589, S609, S630, S632, and S665 each carry phosphoserine. Residues 610 to 633 (FGGKEVDQEPSGEGVTRVDGSESE) form a disordered region. The stretch at 781-804 (EEEKQKLEKLQSLRVKFLRLLQRL) forms a coiled coil. The AIG1-type G domain maps to 853–1087 (IFSLNILVLG…RPQEPLDHRK (235 aa)). The tract at residues 862–869 (GKAGVGKS) is G1. GTP-binding positions include 865-870 (GVGKSA) and 884-889 (DAFGLS). S869 contributes to the Mg(2+) binding site. The homodimerization stretch occupies residues 884 to 887 (DAFG). Residues 889–893 (STTSV) form a G2 region. Residues 909-912 (DTPG) are G3. The interval 947–952 (RLDTQT) is homodimerization. Residues 981–984 (THAA) form a G4 region. GTP is bound by residues H982 and 1035 to 1036 (EN). The G5 stretch occupies residues 1035 to 1037 (ENH). The stretch at 1175 to 1203 (DYRVKLLQKKQWREELKRMKEMKKNGKKL) forms a coiled coil. Positions 1203 to 1222 (LGESEFGYPGEEDDPENGAP) are disordered.

It belongs to the TRAFAC class TrmE-Era-EngA-EngB-Septin-like GTPase superfamily. AIG1/Toc34/Toc159-like paraseptin GTPase family. TOC159 subfamily. In terms of assembly, homodimer and heterodimer with TOC33. Part of the TOC core complex that includes 1 protein for the specific recognition of transit peptides surrounded by a ring composed of four proteins forming translocation channels, and four to five GTP-binding proteins providing energy. This core complex can interact with components of the TIC complex to form a larger import complex. Chloroplastic protein precursor such as prSS (precursor of the RuBisCO small subunit) interacts with these complexes. The TOC complex contains a specific subset of polar lipids such as digalactosyldiacylglyceride (DGDG), phosphatidylcholine (PC) and phosphatidylglycerol (PG). Interacts with SP1. The cofactor is Mg(2+). Post-translationally, phosphorylated by KOC1.

It localises to the plastid. The protein localises to the chloroplast outer membrane. It is found in the cytoplasm. GTPase involved in protein precursor import into chloroplasts. Seems to recognize chloroplast-destined precursor proteins and regulate their presentation to the translocation channel through GTP hydrolysis. Required for chloroplast biogenesis. Probably specialized in the import of nuclear encoded photosynthetic preproteins from the cytoplasm to the chloroplast. This Arabidopsis thaliana (Mouse-ear cress) protein is Translocase of chloroplast 159, chloroplastic.